The primary structure comprises 688 residues: GTPase IMAP family member 8 (688 aa).

The segment covering M1 to Q14 has biased composition (low complexity). The disordered stretch occupies residues M1–Q42. Positions S31 to Q42 are enriched in polar residues. AIG1-type G domains lie at T46 to S247, M282 to E472, and K473 to K677. The G1 stretch occupies residues G55–S62. Residues G55–A63 and S76 contribute to the GTP site. Residues M82–R86 are G2. The interval D103 to D106 is G3. The segment at T172–D175 is G4. Residues R173–D175 and N209 each bind GTP. A G5 region spans residues N208–K210.

Belongs to the TRAFAC class TrmE-Era-EngA-EngB-Septin-like GTPase superfamily. AIG1/Toc34/Toc159-like paraseptin GTPase family. IAN subfamily. Abundantly expressed in the thymus (in thymocytes), spleen (in splenocytes), lymph node, followed by bone marrow and lung.

It localises to the endoplasmic reticulum. It is found in the golgi apparatus. Its subcellular location is the mitochondrion. The protein resides in the cytoplasm. The protein localises to the cytosol. Its function is as follows. Exerts an anti-apoptotic effect in the immune system and is involved in responses to infections. This chain is GTPase IMAP family member 8 (Gimap8), found in Mus musculus (Mouse).